The following is a 370-amino-acid chain: Putative agmatine deiminase (370 aa).

Cys361 (amidino-cysteine intermediate) is an active-site residue.

This sequence belongs to the agmatine deiminase family.

It catalyses the reaction agmatine + H2O = N-carbamoylputrescine + NH4(+). The polypeptide is Putative agmatine deiminase (Shewanella baltica (strain OS195)).